A 1303-amino-acid chain; its full sequence is DNA-directed RNA polymerase subunit beta (1303 aa).

This sequence belongs to the RNA polymerase beta chain family. The RNAP catalytic core consists of 2 alpha, 1 beta, 1 beta' and 1 omega subunit. When a sigma factor is associated with the core the holoenzyme is formed, which can initiate transcription.

The enzyme catalyses RNA(n) + a ribonucleoside 5'-triphosphate = RNA(n+1) + diphosphate. Functionally, DNA-dependent RNA polymerase catalyzes the transcription of DNA into RNA using the four ribonucleoside triphosphates as substrates. The polypeptide is DNA-directed RNA polymerase subunit beta (Chlorobaculum tepidum (strain ATCC 49652 / DSM 12025 / NBRC 103806 / TLS) (Chlorobium tepidum)).